The chain runs to 458 residues: Probable asparagine--tRNA ligase, cytoplasmic (458 aa).

Belongs to the class-II aminoacyl-tRNA synthetase family.

The protein resides in the cytoplasm. The enzyme catalyses tRNA(Asn) + L-asparagine + ATP = L-asparaginyl-tRNA(Asn) + AMP + diphosphate + H(+). This is Probable asparagine--tRNA ligase, cytoplasmic from Enterocytozoon bieneusi (strain H348) (Microsporidian parasite).